The chain runs to 368 residues: 4-hydroxy-3-methylbut-2-en-1-yl diphosphate synthase (flavodoxin) (368 aa).

[4Fe-4S] cluster is bound by residues cysteine 268, cysteine 271, cysteine 303, and glutamate 310.

This sequence belongs to the IspG family. [4Fe-4S] cluster is required as a cofactor.

It carries out the reaction (2E)-4-hydroxy-3-methylbut-2-enyl diphosphate + oxidized [flavodoxin] + H2O + 2 H(+) = 2-C-methyl-D-erythritol 2,4-cyclic diphosphate + reduced [flavodoxin]. It participates in isoprenoid biosynthesis; isopentenyl diphosphate biosynthesis via DXP pathway; isopentenyl diphosphate from 1-deoxy-D-xylulose 5-phosphate: step 5/6. In terms of biological role, converts 2C-methyl-D-erythritol 2,4-cyclodiphosphate (ME-2,4cPP) into 1-hydroxy-2-methyl-2-(E)-butenyl 4-diphosphate. The sequence is that of 4-hydroxy-3-methylbut-2-en-1-yl diphosphate synthase (flavodoxin) from Bacillus cytotoxicus (strain DSM 22905 / CIP 110041 / 391-98 / NVH 391-98).